Reading from the N-terminus, the 522-residue chain is Maturase K (522 aa).

The protein belongs to the intron maturase 2 family. MatK subfamily.

Its subcellular location is the plastid. The protein localises to the chloroplast. Usually encoded in the trnK tRNA gene intron. Probably assists in splicing its own and other chloroplast group II introns. The chain is Maturase K from Watsonia angusta.